Here is a 92-residue protein sequence, read N- to C-terminus: Non-specific lipid-transfer protein A (92 aa).

Disulfide bonds link Cys-3-Cys-51, Cys-13-Cys-28, Cys-29-Cys-74, and Cys-49-Cys-88.

This sequence belongs to the plant LTP family.

Its function is as follows. Plant non-specific lipid-transfer proteins transfer phospholipids as well as galactolipids across membranes. May play a role in wax or cutin deposition in the cell walls of expanding epidermal cells and certain secretory tissues. This Ricinus communis (Castor bean) protein is Non-specific lipid-transfer protein A.